The following is a 283-amino-acid chain: Elongation factor Ts (283 aa).

An involved in Mg(2+) ion dislocation from EF-Tu region spans residues 84-87 (TDFV).

This sequence belongs to the EF-Ts family.

The protein localises to the cytoplasm. In terms of biological role, associates with the EF-Tu.GDP complex and induces the exchange of GDP to GTP. It remains bound to the aminoacyl-tRNA.EF-Tu.GTP complex up to the GTP hydrolysis stage on the ribosome. In Bifidobacterium longum subsp. infantis (strain ATCC 15697 / DSM 20088 / JCM 1222 / NCTC 11817 / S12), this protein is Elongation factor Ts.